The sequence spans 66 residues: DNA-directed RNA polymerase subunit omega (66 aa).

It belongs to the RNA polymerase subunit omega family. In terms of assembly, the RNAP catalytic core consists of 2 alpha, 1 beta, 1 beta' and 1 omega subunit. When a sigma factor is associated with the core the holoenzyme is formed, which can initiate transcription.

It carries out the reaction RNA(n) + a ribonucleoside 5'-triphosphate = RNA(n+1) + diphosphate. In terms of biological role, promotes RNA polymerase assembly. Latches the N- and C-terminal regions of the beta' subunit thereby facilitating its interaction with the beta and alpha subunits. The sequence is that of DNA-directed RNA polymerase subunit omega from Clostridium botulinum (strain Eklund 17B / Type B).